Here is a 300-residue protein sequence, read N- to C-terminus: 11-beta-hydroxysteroid dehydrogenase 1 (300 aa).

Residues 1 to 7 (MAFLKKY) lie on the Cytoplasmic side of the membrane. Residues 8–24 (LLTILMVFLAYYYYSAN) form a helical; Signal-anchor for type II membrane protein membrane-spanning segment. The Lumenal segment spans residues 25 to 300 (EKFRPEMLQG…SNEKLYGRWA (276 aa)). NADP(+) is bound by residues 41 to 67 (GASKGIGREIAYHLAKMGAHVVVTARS), 92 to 93 (SM), and 119 to 123 (NHVLY). Residue S170 coordinates substrate. Y183 functions as the Proton acceptor in the catalytic mechanism. 183-187 (YSASK) contributes to the NADP(+) binding site. An N-linked (GlcNAc...) asparagine glycan is attached at N207. 218–222 (IDTET) lines the NADP(+) pocket.

The protein belongs to the short-chain dehydrogenases/reductases (SDR) family. In terms of assembly, homodimer. In terms of tissue distribution, widely expressed in all peripheral tissues, with highest expression in liver, followed by kidney and lung, and very low expression in heart, lung, spleen, stomach, small intestine, colon, skin, skeletal muscle, and ovary.

It is found in the endoplasmic reticulum membrane. It carries out the reaction an 11beta-hydroxysteroid + NADP(+) = an 11-oxosteroid + NADPH + H(+). The enzyme catalyses cortisone + NADPH + H(+) = cortisol + NADP(+). It catalyses the reaction corticosterone + NADP(+) = 11-dehydrocorticosterone + NADPH + H(+). The catalysed reaction is a 7beta-hydroxysteroid + NADP(+) = a 7-oxosteroid + NADPH + H(+). It carries out the reaction 7-oxocholesterol + NADPH + H(+) = 7beta-hydroxycholesterol + NADP(+). The enzyme catalyses chenodeoxycholate + NADP(+) = 7-oxolithocholate + NADPH + H(+). It catalyses the reaction 7-oxolithocholate + NADPH + H(+) = ursodeoxycholate + NADP(+). The catalysed reaction is glycochenodeoxycholate + NADP(+) = 7-oxoglycolithocholate + NADPH + H(+). It carries out the reaction taurochenodeoxycholate + NADP(+) = 7-oxotaurolithocholate + NADPH + H(+). The enzyme catalyses tauroursodeoxycholate + NADP(+) = 7-oxotaurolithocholate + NADPH + H(+). It catalyses the reaction glycoursodeoxycholate + NADP(+) = 7-oxoglycolithocholate + NADPH + H(+). The catalysed reaction is 7-oxopregnenolone + NADPH + H(+) = 7beta-hydroxypregnenolone + NADP(+). It carries out the reaction 3beta,7alpha-dihydroxyandrost-5-en-17-one + NADP(+) = 3beta-hydroxy-5-androstene-7,17-dione + NADPH + H(+). The enzyme catalyses 3beta-hydroxy-5-androstene-7,17-dione + NADPH + H(+) = 3beta,7beta-dihydroxyandrost-5-en-17-one + NADP(+). It catalyses the reaction 3beta-hydroxy-5alpha-androstane-7,17-dione + NADPH + H(+) = 3beta,7beta-dihydroxy-5alpha-androstan-17-one + NADP(+). Controls the reversible conversion of biologically active glucocorticoids such as cortisone to cortisol, and 11-dehydrocorticosterone to corticosterone in the presence of NADP(H). Participates in the corticosteroid receptor-mediated anti-inflammatory response, as well as metabolic and homeostatic processes. Bidirectional in vitro, predominantly functions as a reductase in vivo, thereby increasing the concentration of active glucocorticoids. It has broad substrate specificity, besides glucocorticoids, it accepts other steroid and sterol substrates. Interconverts 7-oxo- and 7-hydroxy-neurosteroids such as 7-oxopregnenolone and 7beta-hydroxypregnenolone, 7-oxodehydroepiandrosterone (3beta-hydroxy-5-androstene-7,17-dione) and 7beta-hydroxydehydroepiandrosterone (3beta,7beta-dihydroxyandrost-5-en-17-one), among others. Catalyzes the stereo-specific conversion of the major dietary oxysterol, 7-ketocholesterol (7-oxocholesterol), into the more polar 7-beta-hydroxycholesterol metabolite. 7-oxocholesterol is one of the most important oxysterols, it participates in several events such as induction of apoptosis, accumulation in atherosclerotic lesions, lipid peroxidation, and induction of foam cell formation. Mediates the 7-oxo reduction of 7-oxolithocholate mainly to chenodeoxycholate, and to a lesser extent to ursodeoxycholate, both in its free form and when conjugated to glycine or taurine, providing a link between glucocorticoid activation and bile acid metabolism. Catalyzes the synthesis of 7-beta-25-dihydroxycholesterol from 7-oxo-25-hydroxycholesterol in vitro, which acts as a ligand for the G-protein-coupled receptor (GPCR) Epstein-Barr virus-induced gene 2 (EBI2) and may thereby regulate immune cell migration. This chain is 11-beta-hydroxysteroid dehydrogenase 1 (HSD11B1), found in Cavia porcellus (Guinea pig).